A 458-amino-acid chain; its full sequence is ATP synthase subunit beta (458 aa).

148–155 lines the ATP pocket; it reads GGAGVGKT.

The protein belongs to the ATPase alpha/beta chains family. As to quaternary structure, F-type ATPases have 2 components, CF(1) - the catalytic core - and CF(0) - the membrane proton channel. CF(1) has five subunits: alpha(3), beta(3), gamma(1), delta(1), epsilon(1). CF(0) has three main subunits: a(1), b(2) and c(9-12). The alpha and beta chains form an alternating ring which encloses part of the gamma chain. CF(1) is attached to CF(0) by a central stalk formed by the gamma and epsilon chains, while a peripheral stalk is formed by the delta and b chains.

It is found in the cell inner membrane. The enzyme catalyses ATP + H2O + 4 H(+)(in) = ADP + phosphate + 5 H(+)(out). Functionally, produces ATP from ADP in the presence of a proton gradient across the membrane. The catalytic sites are hosted primarily by the beta subunits. This chain is ATP synthase subunit beta, found in Laribacter hongkongensis (strain HLHK9).